The primary structure comprises 359 residues: Putative ankyrin repeat protein R190 (359 aa).

ANK repeat units follow at residues 72 to 103 (RLME…DFRC), 105 to 133 (DCVI…DLNR), 142 to 173 (DEII…SISI), 203 to 234 (LGNL…DINN), 236 to 260 (HEYS…YGLI), 261 to 287 (IHDD…IGHK), and 288 to 317 (PSKQ…DLSD).

The chain is Putative ankyrin repeat protein R190 from Acanthamoeba polyphaga (Amoeba).